A 400-amino-acid polypeptide reads, in one-letter code: Cytohesin-3 (400 aa).

A coiled-coil region spans residues E14–S61. The SEC7 domain occupies F77–N206. Residues N264–S381 enclose the PH domain. Residues K273–T281, R285, Y296, R306, and N355 contribute to the a 1,2-diacyl-sn-glycero-3-phospho-(1D-myo-inositol-3,4,5-trisphosphate) site. The tract at residues R392 to K400 is C-terminal autoinhibitory region.

In terms of assembly, interacts with TAMALIN. Interacts with ARF6. Interacts with FRMD4A. Interacts with FRMD4B. Almost absent from liver, thymus and peripheral blood lymphocytes.

Its subcellular location is the cytoplasm. It is found in the cytosol. The protein resides in the cell membrane. The protein localises to the cell junction. It localises to the adherens junction. Its subcellular location is the tight junction. Its function is as follows. Promotes guanine-nucleotide exchange on ARF1 and ARF6. Promotes the activation of ARF factors through replacement of GDP with GTP. Plays a role in the epithelial polarization. The protein is Cytohesin-3 of Homo sapiens (Human).